Reading from the N-terminus, the 116-residue chain is MSQQIIEEIERRYMKQDVPEFRVGDTVRVGVRVVEGNRERVQEFEGVVIRKRGSGLNENFTVRRIASHGIGVERTFLVHAPRVESIQVVRRGKVRRARLFYLRGLTGKAARIKERR.

Belongs to the bacterial ribosomal protein bL19 family.

This protein is located at the 30S-50S ribosomal subunit interface and may play a role in the structure and function of the aminoacyl-tRNA binding site. The chain is Large ribosomal subunit protein bL19 from Roseiflexus castenholzii (strain DSM 13941 / HLO8).